The primary structure comprises 202 residues: Protein phosphatase inhibitor 2 family member C (202 aa).

Disordered regions lie at residues 1–51 (MSAS…DESS) and 71–118 (PGTS…EQES). Residues 12–17 (KGILKN) form a required for binding PPP1CC region. The span at 19-35 (SSSGSSVATSGQQSGGT) shows a compositional bias: low complexity. Residues 43–55 (KSQKWDESSILAA) form a required for binding PPP1CC region. Over residues 71–80 (PGTSYMSVQD) the composition is skewed to polar residues. Residues 84–112 (DSVRDVEGEDSVRGVEGKEATDASDHSCE) show a composition bias toward basic and acidic residues. The tract at residues 144–147 (HYNE) is required for binding PPP1CC catalytic center, displacing metal ions and inhibition of PPP1CC catalytic activity. The segment at 162 to 202 (LQSEDNENEETPQGTNEEKTAAEESEEAPLTGGLQTQSCDP) is disordered.

It belongs to the protein phosphatase inhibitor 2 family. In terms of tissue distribution, detected in sperm (at protein level).

In terms of biological role, functions as a protein phosphatase inhibitor. It inhibits activity of the catalytic subunit of PP1 and weakly inhibits the activity of myosin-associated phosphates. The polypeptide is Protein phosphatase inhibitor 2 family member C (Homo sapiens (Human)).